We begin with the raw amino-acid sequence, 405 residues long: Glutamate-pyruvate aminotransferase AlaA (405 aa).

L-alanine-binding residues include Gly-41 and Asn-179. Lys-240 carries the N6-(pyridoxal phosphate)lysine modification. Position 378 (Arg-378) interacts with L-alanine.

Belongs to the class-I pyridoxal-phosphate-dependent aminotransferase family. As to quaternary structure, homodimer. Pyridoxal 5'-phosphate is required as a cofactor.

The protein resides in the cytoplasm. The catalysed reaction is L-alanine + 2-oxoglutarate = pyruvate + L-glutamate. It participates in amino-acid biosynthesis; L-alanine biosynthesis. Involved in the biosynthesis of alanine. Catalyzes the transamination of pyruvate by glutamate, leading to the formation of L-alanine and 2-oxoglutarate. Is also able to catalyze the reverse reaction. The sequence is that of Glutamate-pyruvate aminotransferase AlaA from Escherichia coli (strain K12).